We begin with the raw amino-acid sequence, 227 residues long: Peroxiredoxin-like 2A (227 aa).

A thioredoxin fold region spans residues 13–111; it reads LWSISIGAFG…DQLGVPLYAI (99 aa). Residues Cys84 and Cys87 each act as redox-active in the active site.

Belongs to the peroxiredoxin-like PRXL2 family. PRXL2A subfamily.

The protein localises to the cytoplasm. Functionally, involved in redox regulation of the cell. Acts as an antioxidant. The chain is Peroxiredoxin-like 2A (prxl2a) from Xenopus laevis (African clawed frog).